Consider the following 86-residue polypeptide: Small ribosomal subunit protein bS20 (86 aa).

Belongs to the bacterial ribosomal protein bS20 family.

Its function is as follows. Binds directly to 16S ribosomal RNA. The protein is Small ribosomal subunit protein bS20 of Bifidobacterium longum subsp. infantis (strain ATCC 15697 / DSM 20088 / JCM 1222 / NCTC 11817 / S12).